The sequence spans 24 residues: Bombinin (24 aa).

Asparagine amide is present on Asn24.

It belongs to the bombinin family. Expressed by the skin glands.

The protein localises to the secreted. Functionally, has antimicrobial and hemolytic activities. The sequence is that of Bombinin from Bombina variegata (Yellow-bellied toad).